The sequence spans 111 residues: MVELKTFLLYAVTALAEIAGCYLPWLWLRQDRSAWLLVPGAACLALFAWLLTLHPAAAGRVYAAYGGVYVAVALGWLWAVDGIRPDRWDLAGAAVTLAGMAIIAFAPRGAA.

Transmembrane regions (helical) follow at residues 7-27 (FLLY…PWLW), 33-53 (SAWL…LLTL), 63-83 (AAYG…VDGI), and 90-110 (LAGA…PRGA).

This sequence belongs to the UPF0060 family.

Its subcellular location is the cell inner membrane. In Paracidovorax citrulli (strain AAC00-1) (Acidovorax citrulli), this protein is UPF0060 membrane protein Aave_2845.